Reading from the N-terminus, the 439-residue chain is Xylose isomerase (439 aa).

Catalysis depends on residues His-101 and Asp-104. Mg(2+) contacts are provided by Glu-232, Glu-268, His-271, Asp-296, Asp-307, Asp-309, and Asp-339.

Belongs to the xylose isomerase family. In terms of assembly, homotetramer. Mg(2+) serves as cofactor.

Its subcellular location is the cytoplasm. The catalysed reaction is alpha-D-xylose = alpha-D-xylulofuranose. The protein is Xylose isomerase (xylA) of Thermoanaerobacterium saccharolyticum.